A 273-amino-acid polypeptide reads, in one-letter code: Outer surface protein A (273 aa).

Positions 1–16 (MKKYLLGIGLILALIA) are cleaved as a signal peptide. C17 carries N-palmitoyl cysteine lipidation. C17 carries S-diacylglycerol cysteine lipidation.

This sequence belongs to the OspA lipoprotein family.

The protein localises to the cell outer membrane. It is found in the cell surface. This is Outer surface protein A from Borreliella burgdorferi (Lyme disease spirochete).